The chain runs to 440 residues: Replication factor C large subunit (440 aa).

48 to 55 (GPPGVGKT) contributes to the ATP binding site.

This sequence belongs to the activator 1 small subunits family. RfcL subfamily. Heteromultimer composed of small subunits (RfcS) and large subunits (RfcL).

Part of the RFC clamp loader complex which loads the PCNA sliding clamp onto DNA. This is Replication factor C large subunit from Sulfurisphaera tokodaii (strain DSM 16993 / JCM 10545 / NBRC 100140 / 7) (Sulfolobus tokodaii).